The chain runs to 185 residues: UPF0215 protein APE_0476.1 (185 aa).

The protein belongs to the UPF0215 family.

This is UPF0215 protein APE_0476.1 from Aeropyrum pernix (strain ATCC 700893 / DSM 11879 / JCM 9820 / NBRC 100138 / K1).